Consider the following 127-residue polypeptide: Putative pre-16S rRNA nuclease (127 aa).

The protein belongs to the YqgF nuclease family.

The protein localises to the cytoplasm. Functionally, could be a nuclease involved in processing of the 5'-end of pre-16S rRNA. The sequence is that of Putative pre-16S rRNA nuclease from Campylobacter jejuni subsp. jejuni serotype O:23/36 (strain 81-176).